A 121-amino-acid chain; its full sequence is Large ribosomal subunit protein bL19 (121 aa).

It belongs to the bacterial ribosomal protein bL19 family.

Its function is as follows. This protein is located at the 30S-50S ribosomal subunit interface and may play a role in the structure and function of the aminoacyl-tRNA binding site. This Bifidobacterium adolescentis (strain ATCC 15703 / DSM 20083 / NCTC 11814 / E194a) protein is Large ribosomal subunit protein bL19.